Here is a 229-residue protein sequence, read N- to C-terminus: Large ribosomal subunit protein bL19cy (229 aa).

Residues 1–70 (MATSSHLLPQ…DSKKRKEFIA (70 aa)) constitute a chloroplast transit peptide.

Belongs to the bacterial ribosomal protein bL19 family. In terms of assembly, part of the 50S ribosomal subunit.

It is found in the plastid. Its subcellular location is the chloroplast. In terms of biological role, located at the 30S-50S ribosomal subunit interface and binds directly to 23S ribosomal RNA. This Arabidopsis thaliana (Mouse-ear cress) protein is Large ribosomal subunit protein bL19cy.